The chain runs to 429 residues: UPF0242 protein CT_616 (429 aa).

The protein belongs to the UPF0242 family.

This is UPF0242 protein CT_616 from Chlamydia trachomatis serovar D (strain ATCC VR-885 / DSM 19411 / UW-3/Cx).